Here is a 412-residue protein sequence, read N- to C-terminus: Cathepsin D (412 aa).

The N-terminal stretch at 1–20 (MQPSSLLPLALCLLAAPASA) is a signal peptide. The propeptide at 21–64 (LVRIPLHKFTSIRRTMSEVGGSVEDLIAKGPVSKYSQAVPAVTE) is activation peptide. An O-linked (GalNAc...) threonine glycan is attached at Thr63. One can recognise a Peptidase A1 domain in the interval 79–407 (YYGEIGIGTP…DRDNNRVGFA (329 aa)). 2 disulfide bridges follow: Cys91/Cys160 and Cys110/Cys117. Asp97 is an active-site residue. N-linked (GlcNAc...) asparagine glycans are attached at residues Asn134 and Asn263. Cysteines 286 and 290 form a disulfide. Asp295 is a catalytic residue. Residues Cys329 and Cys366 are joined by a disulfide bond.

This sequence belongs to the peptidase A1 family. As to quaternary structure, consists of a light chain and a heavy chain. Interacts with ADAM30; this leads to activation of CTSD. Interacts with GRN; stabilizes CTSD; increases its proteolytic activity. Post-translationally, N- and O-glycosylated. In terms of processing, undergoes proteolytic cleavage and activation by ADAM30. As well as the major heavy chain which starts at Leu-169, 2 minor forms starting at Gly-170 and Gly-171 have been identified. An additional form starting at Ala-168 has also been identified. As to expression, expressed in the aorta extracellular space (at protein level). Expressed in liver (at protein level).

It is found in the lysosome. Its subcellular location is the melanosome. The protein localises to the secreted. The protein resides in the extracellular space. The catalysed reaction is Specificity similar to, but narrower than, that of pepsin A. Does not cleave the 4-Gln-|-His-5 bond in B chain of insulin.. In terms of biological role, acid protease active in intracellular protein breakdown. Plays a role in APP processing following cleavage and activation by ADAM30 which leads to APP degradation. Involved in the pathogenesis of several diseases such as breast cancer and possibly Alzheimer disease. In Homo sapiens (Human), this protein is Cathepsin D (CTSD).